We begin with the raw amino-acid sequence, 166 residues long: Large ribosomal subunit protein uL11 (166 aa).

The protein belongs to the universal ribosomal protein uL11 family.

In Dictyostelium discoideum (Social amoeba), this protein is Large ribosomal subunit protein uL11 (rpl12).